The chain runs to 354 residues: Adenine deaminase (354 aa).

H20, H22, and H200 together coordinate Zn(2+). E203 (proton donor) is an active-site residue. Position 281 (D281) interacts with Zn(2+). Residue D282 coordinates substrate.

This sequence belongs to the metallo-dependent hydrolases superfamily. Adenosine and AMP deaminases family. Adenine deaminase type 2 subfamily. The cofactor is Zn(2+).

The catalysed reaction is adenine + H2O + H(+) = hypoxanthine + NH4(+). Functionally, catalyzes the hydrolytic deamination of adenine to hypoxanthine. Plays an important role in the purine salvage pathway and in nitrogen catabolism. The sequence is that of Adenine deaminase from Cupriavidus metallidurans (strain ATCC 43123 / DSM 2839 / NBRC 102507 / CH34) (Ralstonia metallidurans).